The chain runs to 604 residues: Sulfite reductase [NADPH] flavoprotein alpha-component (604 aa).

One can recognise a Flavodoxin-like domain in the interval 65 to 203 (VTILYGSQTG…AAGQWHADVL (139 aa)). Residues 71-76 (SQTGNG), 118-121 (STHG), and 154-163 (LGDSSYEFFC) contribute to the FMN site. In terms of domain architecture, FAD-binding FR-type spans 236–453 (QNPYSAEVLV…VEPNKHFRLP (218 aa)). FAD contacts are provided by residues T324, L358, 392 to 395 (RLYS), 410 to 412 (TVA), and 425 to 428 (GGAS). NADP(+)-binding positions include 524 to 525 (SR), 530 to 534 (KIYVQ), and D566. Y604 is an FAD binding site.

This sequence belongs to the NADPH-dependent sulphite reductase flavoprotein subunit CysJ family. The protein in the N-terminal section; belongs to the flavodoxin family. It in the C-terminal section; belongs to the flavoprotein pyridine nucleotide cytochrome reductase family. As to quaternary structure, alpha(8)-beta(8). The alpha component is a flavoprotein, the beta component is a hemoprotein. FAD serves as cofactor. The cofactor is FMN.

The catalysed reaction is hydrogen sulfide + 3 NADP(+) + 3 H2O = sulfite + 3 NADPH + 4 H(+). The protein operates within sulfur metabolism; hydrogen sulfide biosynthesis; hydrogen sulfide from sulfite (NADPH route): step 1/1. Its function is as follows. Component of the sulfite reductase complex that catalyzes the 6-electron reduction of sulfite to sulfide. This is one of several activities required for the biosynthesis of L-cysteine from sulfate. The flavoprotein component catalyzes the electron flow from NADPH -&gt; FAD -&gt; FMN to the hemoprotein component. The chain is Sulfite reductase [NADPH] flavoprotein alpha-component from Shewanella sp. (strain MR-4).